A 170-amino-acid polypeptide reads, in one-letter code: Large ribosomal subunit protein uL16 (170 aa).

This sequence belongs to the universal ribosomal protein uL16 family.

The polypeptide is Large ribosomal subunit protein uL16 (Methanoculleus marisnigri (strain ATCC 35101 / DSM 1498 / JR1)).